The sequence spans 522 residues: Maturase K (522 aa).

It belongs to the intron maturase 2 family. MatK subfamily.

Its subcellular location is the plastid. It is found in the chloroplast. Its function is as follows. Usually encoded in the trnK tRNA gene intron. Probably assists in splicing its own and other chloroplast group II introns. This Dianella ensifolia (Flax lily) protein is Maturase K.